A 295-amino-acid polypeptide reads, in one-letter code: Sulfotransferase 1A1 (295 aa).

A 3'-phosphoadenylyl sulfate-binding site is contributed by 48–53 (KSGTTW). Residue 106–108 (KTH) coordinates substrate. H108 (proton acceptor) is an active-site residue. 3'-phosphoadenylyl sulfate-binding positions include R130, S138, Y193, 227–232 (TSFKEM), and 255–259 (FMRKG). S138 bears the Phosphoserine mark.

This sequence belongs to the sulfotransferase 1 family. As to quaternary structure, homodimer. As to expression, ubiquitously expressed in canine tissues with highest expression in male and female liver.

It is found in the cytoplasm. The enzyme catalyses a phenol + 3'-phosphoadenylyl sulfate = an aryl sulfate + adenosine 3',5'-bisphosphate + H(+). The catalysed reaction is 17beta-estradiol + 3'-phosphoadenylyl sulfate = 17beta-estradiol 3-sulfate + adenosine 3',5'-bisphosphate + H(+). It carries out the reaction 4-ethylphenol + 3'-phosphoadenylyl sulfate = 4-ethylphenyl sulfate + adenosine 3',5'-bisphosphate + H(+). It catalyses the reaction 4-nitrophenol + 3'-phosphoadenylyl sulfate = 4-nitrophenyl sulfate + adenosine 3',5'-bisphosphate. The enzyme catalyses dopamine + 3'-phosphoadenylyl sulfate = dopamine 3-O-sulfate + adenosine 3',5'-bisphosphate + H(+). The catalysed reaction is dopamine + 3'-phosphoadenylyl sulfate = dopamine 4-O-sulfate + adenosine 3',5'-bisphosphate + H(+). It carries out the reaction 3,3',5-triiodo-L-thyronine + 3'-phosphoadenylyl sulfate = 3,3',5-triiodo-L-thyronine sulfate + adenosine 3',5'-bisphosphate + H(+). It catalyses the reaction 3,3',5'-triiodo-L-thyronine + 3'-phosphoadenylyl sulfate = 3,3',5'-triiodo-L-thyronine sulfate + adenosine 3',5'-bisphosphate + H(+). The enzyme catalyses 3,3'-diiodo-L-thyronine + 3'-phosphoadenylyl sulfate = 3,3'-diiodo-L-thyronine sulfate + adenosine 3',5'-bisphosphate + H(+). The catalysed reaction is L-thyroxine + 3'-phosphoadenylyl sulfate = L-thyroxine sulfate + adenosine 3',5'-bisphosphate + H(+). Its function is as follows. Sulfotransferase that utilizes 3'-phospho-5'-adenylyl sulfate (PAPS) as sulfonate donor to catalyze the sulfate conjugation of a wide variety of acceptor molecules bearing a hydroxyl or an amine group. Sulfonation increases the water solubility of most compounds, and therefore their renal excretion, but it can also result in bioactivation to form active metabolites. Displays broad substrate specificity for small phenolic compounds. Plays an important role in the sulfonation of endogenous molecules such as steroid hormones. Mediates also the metabolic activation of carcinogenic N-hydroxyarylamines leading to highly reactive intermediates capable of forming DNA adducts, potentially resulting in mutagenesis. May play a role in gut microbiota-host metabolic interaction. O-sulfonates 4-ethylphenol (4-EP), a dietary tyrosine-derived metabolite produced by gut bacteria. The product 4-EPS crosses the blood-brain barrier and may negatively regulate oligodendrocyte maturation and myelination, affecting the functional connectivity of different brain regions associated with the limbic system. Catalyzes the sulfate conjugation of dopamine. Catalyzes the sulfation of T4 (L-thyroxine/3,5,3',5'-tetraiodothyronine), T3 (3,5,3'-triiodothyronine), rT3 (3,3',5'-triiodothyronine) and 3,3'-T2 (3,3'-diiodothyronine), with a substrate preference of 3,3'-T2 &gt; rT3 &gt; T3 &gt; T4. The protein is Sulfotransferase 1A1 (SULT1A1) of Canis lupus familiaris (Dog).